The chain runs to 283 residues: Orotidine 5'-phosphate decarboxylase (283 aa).

Substrate contacts are provided by residues Asp-40, 62–64, 93–102, Tyr-220, and Arg-239; these read KTH and DRKFADIGNT. Lys-95 serves as the catalytic Proton donor.

This sequence belongs to the OMP decarboxylase family.

The enzyme catalyses orotidine 5'-phosphate + H(+) = UMP + CO2. It functions in the pathway pyrimidine metabolism; UMP biosynthesis via de novo pathway; UMP from orotate: step 2/2. The protein is Orotidine 5'-phosphate decarboxylase (PYR6) of Mycosarcoma maydis (Corn smut fungus).